A 395-amino-acid polypeptide reads, in one-letter code: Elongation factor Tu (395 aa).

Residues 10–204 (KPHVNIGTIG…AVDEYIPTPQ (195 aa)) enclose the tr-type G domain. The G1 stretch occupies residues 19-26 (GHVDHGKT). GTP is bound at residue 19-26 (GHVDHGKT). Thr-26 is a binding site for Mg(2+). Positions 60-64 (GITIS) are G2. Residues 81–84 (DCPG) form a G3 region. GTP is bound by residues 81 to 85 (DCPGH) and 136 to 139 (NKCD). The interval 136–139 (NKCD) is G4. Residues 174 to 176 (SAL) form a G5 region.

Belongs to the TRAFAC class translation factor GTPase superfamily. Classic translation factor GTPase family. EF-Tu/EF-1A subfamily. In terms of assembly, monomer.

It localises to the cytoplasm. The catalysed reaction is GTP + H2O = GDP + phosphate + H(+). GTP hydrolase that promotes the GTP-dependent binding of aminoacyl-tRNA to the A-site of ribosomes during protein biosynthesis. The protein is Elongation factor Tu of Geobacillus sp. (strain WCH70).